A 508-amino-acid chain; its full sequence is POTE ankyrin domain family member G (508 aa).

ANK repeat units follow at residues 172–201 (QKRT…QLNI), 205–234 (KKRT…DPNI), 238–267 (YGNT…DIES), 271–300 (HGLT…NLNA), and 304–333 (YGRT…DVSS). Positions 367 to 376 (KVSSENSNPE) are enriched in polar residues. The segment at 367-488 (KVSSENSNPE…QLSEEQNTGI (122 aa)) is disordered. Basic and acidic residues-rich tracts occupy residues 377–392 (QDLK…RLKG) and 406–421 (EINK…EMKK). Positions 476 to 488 (TQKQLSEEQNTGI) are enriched in polar residues.

It belongs to the POTE family.

The protein is POTE ankyrin domain family member G (POTEG) of Homo sapiens (Human).